Consider the following 705-residue polypeptide: MPRNTALEKYRNIGICAHVDAGKTTTTERILFYTGLSHKIGEVHDGAATMDWMEQEQERGITITSAATTTFWSGMDQQFDKHRINIIDTPGHVDFTIEVERSLRVLDGAVVVFCGSSGVEPQSETVWRQANKYGVPRIVFVNKMDRSGADFERVCGQIRTRLKANVVPVQLNIGAEEDFKGVVDLIRMKAIMWNEADQGLTYDLVDIPAELQDRAEELRMEMMEAAAEASEELMDKYLEEGELSNEEIKQGLRARVLANEIVLAFCGSAFKNKGVQAVLDGVVEYLPAPNQVPAIKCETEDGEPASRSSSDDEPFAALAFKLATDPFVGNLTFIRVYSGVLKSGDAVYNPVKGKKERVGRIVQMHANKREEIKEVRAGDIAACIGLKDVTTGDTLCDLDKPVILERMDFPEPVISVAVEPKTKADQEKMSIALGKLAAEDPSFRVKTDEESGQTIISGMGELHLDIIVDRMRREFKVEANVGNPQVAYRETIRGTVEQNSKFVRQSGGRGQYGHVVVKFEPLEVSTNDAGEEKIFEFVDEIVGGVIPKEFIGPVAKGIEEQMTNGVLAGYPMIGVKATLFDGSYHDVDSSEMAFKIAGSMALKEGAKKANACILEPIMKVEVVTPEDYLGDVMGDLNRRRGIIEGMDENPSGRVVSALVPLAEMFGYATNVRSMSQGRASFSMEFKKYAEVPNNIADEIIKSRNS.

Residues 8–290 form the tr-type G domain; the sequence is EKYRNIGICA…GVVEYLPAPN (283 aa). Residues 17-24, 88-92, and 142-145 each bind GTP; these read AHVDAGKT, DTPGH, and NKMD.

This sequence belongs to the TRAFAC class translation factor GTPase superfamily. Classic translation factor GTPase family. EF-G/EF-2 subfamily.

It localises to the cytoplasm. Functionally, catalyzes the GTP-dependent ribosomal translocation step during translation elongation. During this step, the ribosome changes from the pre-translocational (PRE) to the post-translocational (POST) state as the newly formed A-site-bound peptidyl-tRNA and P-site-bound deacylated tRNA move to the P and E sites, respectively. Catalyzes the coordinated movement of the two tRNA molecules, the mRNA and conformational changes in the ribosome. The sequence is that of Elongation factor G from Francisella philomiragia subsp. philomiragia (strain ATCC 25017 / CCUG 19701 / FSC 153 / O#319-036).